We begin with the raw amino-acid sequence, 556 residues long: Phenylalanine--tRNA ligase beta subunit (556 aa).

Positions leucine 278–proline 354 constitute a B5 domain. The Mg(2+) site is built by aspartate 332, aspartate 338, glutamate 341, and aspartate 342.

Belongs to the phenylalanyl-tRNA synthetase beta subunit family. Type 2 subfamily. As to quaternary structure, tetramer of two alpha and two beta subunits. Requires Mg(2+) as cofactor.

Its subcellular location is the cytoplasm. The catalysed reaction is tRNA(Phe) + L-phenylalanine + ATP = L-phenylalanyl-tRNA(Phe) + AMP + diphosphate + H(+). The chain is Phenylalanine--tRNA ligase beta subunit from Pyrococcus furiosus (strain ATCC 43587 / DSM 3638 / JCM 8422 / Vc1).